A 378-amino-acid polypeptide reads, in one-letter code: Signal recognition particle receptor FtsY (378 aa).

GTP is bound by residues Gly-184–Thr-191, Asp-266–Arg-270, and Thr-330–Asp-333.

The protein belongs to the GTP-binding SRP family. FtsY subfamily. As to quaternary structure, part of the signal recognition particle protein translocation system, which is composed of SRP and FtsY. SRP is a ribonucleoprotein composed of Ffh and a 4.5S RNA molecule.

The protein resides in the cell membrane. It localises to the cytoplasm. It catalyses the reaction GTP + H2O = GDP + phosphate + H(+). In terms of biological role, involved in targeting and insertion of nascent membrane proteins into the cytoplasmic membrane. Acts as a receptor for the complex formed by the signal recognition particle (SRP) and the ribosome-nascent chain (RNC). Interaction with SRP-RNC leads to the transfer of the RNC complex to the Sec translocase for insertion into the membrane, the hydrolysis of GTP by both Ffh and FtsY, and the dissociation of the SRP-FtsY complex into the individual components. This chain is Signal recognition particle receptor FtsY, found in Buchnera aphidicola subsp. Acyrthosiphon pisum (strain APS) (Acyrthosiphon pisum symbiotic bacterium).